The sequence spans 367 residues: Innexin inx4 (367 aa).

Residues 1–21 lie on the Cytoplasmic side of the membrane; the sequence is MYAAVKPLSKYLQFKSVHIYD. A helical membrane pass occupies residues 22 to 42; sequence AIFTLHSKVTVALLLACTFLL. Residues 43–110 lie on the Extracellular side of the membrane; sequence SSKQYFGDPI…PENRNYITYY (68 aa). Residues 111 to 131 form a helical membrane-spanning segment; the sequence is QWVVLVLLLESFVFYMPAFLW. Topologically, residues 132–186 are cytoplasmic; that stretch reads KIWEGGRLKHLCDDFHKMAVCKDKSRTHLRVLVNYFSSDYKETHFRYFVSYVFCE. Residues 187 to 207 form a helical membrane-spanning segment; sequence ILNLSISILNFLLLDVFFGGF. The Extracellular segment spans residues 208-268; it reads WGRYRNALLS…LLPLNILNEK (61 aa). The helical transmembrane segment at 269–289 threads the bilayer; it reads IFAFLWIWFILVAMLISLKFL. Over 290 to 367 the chain is Cytoplasmic; sequence YRLATVLYPG…IKIPPGADKI (78 aa).

The protein belongs to the pannexin family. As to expression, expressed in nurse cells and oocyte during oogenesis. Uniform expression in imaginal wing disk and low expression in developing imaginal CNS. Expressed in embryonic pole cells and primordial germ cells.

The protein localises to the cell membrane. It localises to the cell junction. Its subcellular location is the gap junction. In terms of biological role, structural component of the gap junctions in germline cells. Required for differentiation and survival of germline cysts in females and of spermatogonia in males; gap junctional communication between spermatogonia and somatic cyst cells may be required for normal differentiation and survival of spermatogonia. In Drosophila melanogaster (Fruit fly), this protein is Innexin inx4 (zpg).